The sequence spans 407 residues: Phosphopentomutase (407 aa).

6 residues coordinate Mn(2+): Asp10, Asp306, His311, Asp347, His348, and His359.

The protein belongs to the phosphopentomutase family. Requires Mn(2+) as cofactor.

It localises to the cytoplasm. It carries out the reaction 2-deoxy-alpha-D-ribose 1-phosphate = 2-deoxy-D-ribose 5-phosphate. It catalyses the reaction alpha-D-ribose 1-phosphate = D-ribose 5-phosphate. It functions in the pathway carbohydrate degradation; 2-deoxy-D-ribose 1-phosphate degradation; D-glyceraldehyde 3-phosphate and acetaldehyde from 2-deoxy-alpha-D-ribose 1-phosphate: step 1/2. Its function is as follows. Isomerase that catalyzes the conversion of deoxy-ribose 1-phosphate (dRib-1-P) and ribose 1-phosphate (Rib-1-P) to deoxy-ribose 5-phosphate (dRib-5-P) and ribose 5-phosphate (Rib-5-P), respectively. The polypeptide is Phosphopentomutase (Shigella dysenteriae serotype 1 (strain Sd197)).